The chain runs to 499 residues: MDNMNHEELNDQLIVRREKLHNLREQGIDPFGKRFERTNSTTDLVSLYGEFSKEELEEKEIAVSIAGRIMTKRGKGKAGFAHVQDLHGQVQIYVRKDAVGDDEYELFKTADLGDLVGIEGKVFKTNVGELSVKATGFTLLTKSLRPLPDKYHGLKDVEQRYRQRYLDLITSMESRETFVTRSKIIREMRRYLDDNGYLEVETPMMHAIAGGASARPFTTHHNALDMELYMRIAIELHLKRLIVGGLEKVYEIGRVFRNEGVSTRHNPEFTMIELYEAYADYKDIMKLTEDMVAHIAKKVLGTTTIQYGDYEINLEPEWTRLHMVDAIKQYSGADFWNPMSVEEARELAKEHNVEIKDTMEVGHIINEFFEQKVEDKLIQPTFIYGHPVEISPLAKKNDEDPRFTDRFELFIVAREHANAFTELNDPIDQKERFEAQLKEREQGNDEAHMMDDDYIEALEYGMPPTGGLGIGIDRLVMLLTNAPSIRDVLLFPAMRHKQD.

Mg(2+)-binding residues include Glu-408 and Glu-415.

This sequence belongs to the class-II aminoacyl-tRNA synthetase family. Homodimer. The cofactor is Mg(2+).

It localises to the cytoplasm. The catalysed reaction is tRNA(Lys) + L-lysine + ATP = L-lysyl-tRNA(Lys) + AMP + diphosphate. In Bacillus cereus (strain B4264), this protein is Lysine--tRNA ligase.